The sequence spans 149 residues: Ribonuclease pancreatic (149 aa).

The first 25 residues, 1 to 25, serve as a signal peptide directing secretion; the sequence is MGLEKSFILFSLLVLVLGWVQPSLG. Residues lysine 32 and arginine 35 each contribute to the substrate site. The Proton acceptor role is filled by histidine 37. 4 disulfides stabilise this stretch: cysteine 51-cysteine 109, cysteine 65-cysteine 120, cysteine 83-cysteine 135, and cysteine 90-cysteine 97. Substrate-binding positions include 66–70, lysine 91, and arginine 110; that span reads KPVNT. The active-site Proton donor is the histidine 144.

This sequence belongs to the pancreatic ribonuclease family. Monomer. Interacts with and forms tight 1:1 complexes with RNH1. Dimerization of two such complexes may occur. Interaction with RNH1 inhibits this protein. As to expression, pancreas.

It is found in the secreted. The catalysed reaction is an [RNA] containing cytidine + H2O = an [RNA]-3'-cytidine-3'-phosphate + a 5'-hydroxy-ribonucleotide-3'-[RNA].. It carries out the reaction an [RNA] containing uridine + H2O = an [RNA]-3'-uridine-3'-phosphate + a 5'-hydroxy-ribonucleotide-3'-[RNA].. In terms of biological role, endonuclease that catalyzes the cleavage of RNA on the 3' side of pyrimidine nucleotides. Acts on single-stranded and double-stranded RNA. The protein is Ribonuclease pancreatic (RNASE1) of Leopoldamys edwardsi (Edwards's long-tailed giant rat).